Consider the following 55-residue polypeptide: Large ribosomal subunit protein bL33B (55 aa).

The protein belongs to the bacterial ribosomal protein bL33 family.

The protein is Large ribosomal subunit protein bL33B of Kineococcus radiotolerans (strain ATCC BAA-149 / DSM 14245 / SRS30216).